A 354-amino-acid polypeptide reads, in one-letter code: Uroporphyrinogen decarboxylase (354 aa).

Substrate contacts are provided by residues 27 to 31, D77, Y153, T208, and H326; that span reads RQAGR.

It belongs to the uroporphyrinogen decarboxylase family. As to quaternary structure, homodimer.

It is found in the cytoplasm. The enzyme catalyses uroporphyrinogen III + 4 H(+) = coproporphyrinogen III + 4 CO2. The protein operates within porphyrin-containing compound metabolism; protoporphyrin-IX biosynthesis; coproporphyrinogen-III from 5-aminolevulinate: step 4/4. Catalyzes the decarboxylation of four acetate groups of uroporphyrinogen-III to yield coproporphyrinogen-III. The chain is Uroporphyrinogen decarboxylase from Neisseria meningitidis serogroup C (strain 053442).